Here is a 250-residue protein sequence, read N- to C-terminus: Low affinity immunoglobulin gamma Fc region receptor III-A (250 aa).

The first 16 residues, 1–16 (MWQLLPPAALLLLVSA), serve as a signal peptide directing secretion. At 17–208 (DTQTADPSKA…VSSFFLPWHQ (192 aa)) the chain is on the extracellular side. Ig-like C2-type domains lie at 23–105 (PSKA…LEVH) and 99–189 (PVKL…VQIT). 2 disulfides stabilise this stretch: cysteine 47–cysteine 89 and cysteine 128–cysteine 172. N-linked (GlcNAc...) asparagine glycans are attached at residues asparagine 56 and asparagine 63. Asparagine 180 carries an N-linked (GlcNAc...) asparagine glycan. Residues 209 to 225 (ITFCLVMGVLFAVDTGL) form a helical membrane-spanning segment. Residues 226 to 250 (YFSVRRHLQSSEEWRDGKVTWSKGP) lie on the Cytoplasmic side of the membrane.

Forms a heterooligomeric complex with ITAM-containing signaling subunits FCER1G. Interacts (via transmembrane domain) with signaling subunits; this interaction is a prerequisite for receptor complex expression on the cell surface and intracellular signal transduction. Binds the Fc region of antigen-complexed IgG. In terms of tissue distribution, expressed in gamma-delta T cells.

The protein localises to the cell membrane. Functionally, receptor for the invariable Fc fragment of immunoglobulin gamma (IgG). Optimally activated upon binding of clustered antigen-IgG complexes displayed on cell surfaces, triggers lysis of antibody-coated cells, a process known as antibody-dependent cellular cytotoxicity (ADCC). Does not bind free monomeric IgG, thus avoiding inappropriate effector cell activation in the absence of antigenic trigger. Mediates IgG effector functions on natural killer (NK) cells. Binds antigen-IgG complexes generated upon infection and triggers NK cell-dependent cytokine production and degranulation to limit viral load and propagation. Fc-binding subunit that associates with FCER1G adapters to form functional signaling complexes. Following the engagement of antigen-IgG complexes, triggers phosphorylation of immunoreceptor tyrosine-based activation motif (ITAM)-containing adapter with subsequent activation of phosphatidylinositol 3-kinase signaling and sustained elevation of intracellular calcium that ultimately drive NK cell activation. Mediates enhanced ADCC in response to afucosylated IgGs. The sequence is that of Low affinity immunoglobulin gamma Fc region receptor III-A from Bos taurus (Bovine).